We begin with the raw amino-acid sequence, 218 residues long: Capsid protein (218 aa).

Methionine 1 bears the N-acetylmethionine; by host mark. The disordered stretch occupies residues 1–29; the sequence is MDKSESTSAGRNHRRRPRRGSRSAPSSAD. The segment covering 11–21 has biased composition (basic residues); the sequence is RNHRRRPRRGS.

It belongs to the cucumovirus capsid protein family.

Its subcellular location is the virion. Capsid protein. Probably binds RNA and plays a role in packaging. This chain is Capsid protein, found in Cucumber mosaic virus (strain C) (CMV).